The sequence spans 210 residues: Small ribosomal subunit protein uS3 (210 aa).

One can recognise a KH type-2 domain in the interval 38–106; it reads IRAFLKKRLY…EIFINIIEVR (69 aa).

It belongs to the universal ribosomal protein uS3 family. As to quaternary structure, part of the 30S ribosomal subunit. Forms a tight complex with proteins S10 and S14.

In terms of biological role, binds the lower part of the 30S subunit head. Binds mRNA in the 70S ribosome, positioning it for translation. The polypeptide is Small ribosomal subunit protein uS3 (Pelobacter propionicus (strain DSM 2379 / NBRC 103807 / OttBd1)).